Reading from the N-terminus, the 1037-residue chain is Glycine dehydrogenase (decarboxylating) A, mitochondrial (1037 aa).

Residues 1–66 (MERARRLANK…LNGFGSQVRT (66 aa)) constitute a mitochondrion transit peptide. K773 is subject to N6-(pyridoxal phosphate)lysine.

This sequence belongs to the GcvP family. In terms of assembly, homodimer. The glycine cleavage system is composed of four proteins: P, T, L and H. Pyridoxal 5'-phosphate is required as a cofactor. Expressed in leaves, stems and roots.

Its subcellular location is the mitochondrion. It carries out the reaction N(6)-[(R)-lipoyl]-L-lysyl-[glycine-cleavage complex H protein] + glycine + H(+) = N(6)-[(R)-S(8)-aminomethyldihydrolipoyl]-L-lysyl-[glycine-cleavage complex H protein] + CO2. In terms of biological role, the glycine cleavage system catalyzes the degradation of glycine. The P protein binds the alpha-amino group of glycine through its pyridoxal phosphate cofactor; CO(2) is released and the remaining methylamine moiety is then transferred to the lipoamide cofactor of the H protein. This is Glycine dehydrogenase (decarboxylating) A, mitochondrial (GDCSPA) from Flaveria pringlei.